We begin with the raw amino-acid sequence, 148 residues long: Putative pre-16S rRNA nuclease (148 aa).

It belongs to the YqgF nuclease family.

The protein localises to the cytoplasm. In terms of biological role, could be a nuclease involved in processing of the 5'-end of pre-16S rRNA. The polypeptide is Putative pre-16S rRNA nuclease (Chromohalobacter salexigens (strain ATCC BAA-138 / DSM 3043 / CIP 106854 / NCIMB 13768 / 1H11)).